Consider the following 490-residue polypeptide: tRNA-guanine(15) transglycosylase (490 aa).

The active-site Nucleophile is the aspartate 90. Aspartate 125 and alanine 193 together coordinate substrate. Zn(2+)-binding residues include cysteine 276, cysteine 278, and cysteine 281.

This sequence belongs to the archaeosine tRNA-ribosyltransferase family. It depends on Zn(2+) as a cofactor.

The enzyme catalyses guanosine(15) in tRNA + 7-cyano-7-deazaguanine = 7-cyano-7-carbaguanosine(15) in tRNA + guanine. Its pathway is tRNA modification; archaeosine-tRNA biosynthesis. In terms of biological role, exchanges the guanine residue with 7-cyano-7-deazaguanine (preQ0) at position 15 in the dihydrouridine loop (D-loop) of archaeal tRNAs. This chain is tRNA-guanine(15) transglycosylase, found in Methanosarcina mazei (strain ATCC BAA-159 / DSM 3647 / Goe1 / Go1 / JCM 11833 / OCM 88) (Methanosarcina frisia).